The chain runs to 275 residues: Phosphonoacetaldehyde hydrolase (275 aa).

Asp15 functions as the Nucleophile in the catalytic mechanism. Residues Asp15 and Ala17 each coordinate Mg(2+). The Schiff-base intermediate with substrate role is filled by Lys56. Position 189 (Asp189) interacts with Mg(2+).

It belongs to the HAD-like hydrolase superfamily. PhnX family. Homodimer. The cofactor is Mg(2+).

It carries out the reaction phosphonoacetaldehyde + H2O = acetaldehyde + phosphate + H(+). In terms of biological role, involved in phosphonate degradation. The sequence is that of Phosphonoacetaldehyde hydrolase from Pseudomonas paraeruginosa (strain DSM 24068 / PA7) (Pseudomonas aeruginosa (strain PA7)).